The sequence spans 613 residues: MHIHKLKAKIKKKHQEKYLTKKKIQKKLFLNESEFRRLCIFKGIYPKDYKDIPLKFRNKFYKNKVYYTRNDYKKLSNEKIIQDFRKIKTSLKRYKKYKITLEDNERCKNIIKNFPKYKLDHIIKERFPILVYAVEQLNDALTAIIAYSFLPSNENIGIKNNLINQSIILRNHVKGYYLQAEILQKKITWLIPHIFTPYFDKSIDFKIITNFIEYYVTLLRFILYKLYRLDGMSYPPKEYKDLKNEKLNHLSFDKNYITKELSNELETKESTEDNIIEENEKKTKNGKTENCEKNDQENEKKTKNDKTKNCEKNDQKNDQKNDQKNDQKNDQKNEMKQIEHDIIXNDNTKSVKNLFKNHIFYIHSNMPFDVLSIIILSCGGTICWNSLYSPYKYDDKSITHEILEVSEENKNTQDSNKINNINEYTYKRSFIQPQYIFDCLNSNMILSCEDYNINKTLPVHLSPFIDDDNYKDLVKKDEYTINKMLSEDPQYNKSIQKNKTNSENKXNNYNDNENDMSEDEYNNAIRQKLRNDALNNQMEAENENNYNPQNDLKQENDLLNVQKINNQENIKRNKLALSKKKRKLYNKIEQAENRQKLTIEKFIKKSKNKKKQK.

Residues 259-344 (KELSNELETK…MKQIEHDIIX (86 aa)) adopt a coiled-coil conformation. The interval 268-333 (KESTEDNIIE…KNDQKNDQKN (66 aa)) is disordered. Positions 278–333 (ENEKKTKNGKTENCEKNDQENEKKTKNDKTKNCEKNDQKNDQKNDQKNDQKNDQKN) are enriched in basic and acidic residues. The region spanning 350-453 (SVKNLFKNHI…MILSCEDYNI (104 aa)) is the BRCT domain. The tract at residues 485-517 (LSEDPQYNKSIQKNKTNSENKXNNYNDNENDMS) is disordered. Positions 492–601 (NKSIQKNKTN…ENRQKLTIEK (110 aa)) form a coiled coil. A compositionally biased stretch (low complexity) spans 497 to 511 (KNKTNSENKXNNYND).

It belongs to the pescadillo family.

It is found in the nucleus. The protein resides in the nucleolus. The protein localises to the nucleoplasm. Required for maturation of ribosomal RNAs and formation of the large ribosomal subunit. The protein is Pescadillo homolog of Plasmodium yoelii yoelii.